A 373-amino-acid polypeptide reads, in one-letter code: MFHLLGAQQNQKLKRRRFFCPVCGGELAVKLGLQKAPHFAHKQNKSCAIDIEPESAYHLEGKRQLYVWLKTQRASPILEPYIRTINQRPDVMARIKEHMLAVEYQCATIAPDVFQKRTEGFKQEGIIPQWIMGYSRLKRTASSFYQLSTFHWQFINASPYRELICYCPERRSFLRLSHIIPFYTNHSYSSVQTIPIHRAGAGDLFFTEPKPSIQYSGWTKAIHRFRHKPHRFNSKETNRLRLLFYEKRQTPFSFLPTEVFVPVRKGAVFKSPVFVWQGFLYLFMTDLGGKRAPIRFSAVLQQCKLHIHNKNIALRSECSEECLSEAVKQYIDFLCKKGFLRETQKEVYVLNQPAGGIHSMQDLIERDRSCFIE.

It is found in the cytoplasm. Its function is as follows. Required for optimal transformation. The protein is Competence protein CoiA (coiA) of Bacillus subtilis (strain 168).